Consider the following 451-residue polypeptide: Phosphoglucosamine mutase (451 aa).

The active-site Phosphoserine intermediate is Ser-102. Mg(2+) contacts are provided by Ser-102, Asp-242, Asp-244, and Asp-246. Ser-102 carries the phosphoserine modification.

This sequence belongs to the phosphohexose mutase family. Requires Mg(2+) as cofactor. Post-translationally, activated by phosphorylation.

The catalysed reaction is alpha-D-glucosamine 1-phosphate = D-glucosamine 6-phosphate. Catalyzes the conversion of glucosamine-6-phosphate to glucosamine-1-phosphate. The chain is Phosphoglucosamine mutase from Staphylococcus saprophyticus subsp. saprophyticus (strain ATCC 15305 / DSM 20229 / NCIMB 8711 / NCTC 7292 / S-41).